Consider the following 137-residue polypeptide: Putative pre-16S rRNA nuclease (137 aa).

The protein belongs to the YqgF nuclease family.

Its subcellular location is the cytoplasm. Its function is as follows. Could be a nuclease involved in processing of the 5'-end of pre-16S rRNA. In Oceanobacillus iheyensis (strain DSM 14371 / CIP 107618 / JCM 11309 / KCTC 3954 / HTE831), this protein is Putative pre-16S rRNA nuclease.